We begin with the raw amino-acid sequence, 215 residues long: Cytochrome b6 (215 aa).

The helical transmembrane segment at 32 to 52 threads the bilayer; it reads IFYCLGGITLTCFLVQVATGF. Cysteine 35 provides a ligand contact to heme c. Heme b contacts are provided by histidine 86 and histidine 100. The next 3 membrane-spanning stretches (helical) occupy residues 90–110, 116–136, and 186–206; these read ASMM…TGGF, LTWV…VTGY, and LHTF…FPMI. The heme b site is built by histidine 187 and histidine 202.

It belongs to the cytochrome b family. PetB subfamily. In terms of assembly, the 4 large subunits of the cytochrome b6-f complex are cytochrome b6, subunit IV (17 kDa polypeptide, PetD), cytochrome f and the Rieske protein, while the 4 small subunits are PetG, PetL, PetM and PetN. The complex functions as a dimer. Requires heme b as cofactor. The cofactor is heme c.

It localises to the plastid. Its subcellular location is the chloroplast thylakoid membrane. Component of the cytochrome b6-f complex, which mediates electron transfer between photosystem II (PSII) and photosystem I (PSI), cyclic electron flow around PSI, and state transitions. This Helianthus annuus (Common sunflower) protein is Cytochrome b6.